The primary structure comprises 87 residues: MVNMEASMFLTFAGLVLLFVVCYASESEEKEFPKEMLSSIFAVDNDFKQEERDCAGYMRECKEKLCCSGYVCSSRWKWCVLPAPWRR.

The signal sequence occupies residues 1 to 24 (MVNMEASMFLTFAGLVLLFVVCYA). A propeptide spanning residues 25-52 (SESEEKEFPKEMLSSIFAVDNDFKQEER) is cleaved from the precursor. 3 cysteine pairs are disulfide-bonded: cysteine 54/cysteine 67, cysteine 61/cysteine 72, and cysteine 66/cysteine 79.

The protein belongs to the neurotoxin 10 (Hwtx-1) family. 51 (Hntx-8) subfamily. Hntx-8 sub-subfamily. In terms of tissue distribution, expressed by the venom gland.

The protein resides in the secreted. Functionally, ion channel inhibitor. The sequence is that of U3-theraphotoxin-Hhn1a 10 from Cyriopagopus hainanus (Chinese bird spider).